The primary structure comprises 365 residues: Peridinin-chlorophyll a-binding protein, chloroplastic (365 aa).

The transit peptide at Met1–Ala52 directs the protein to the chloroplast. Tandem repeats lie at residues Asp53–Gly215 and Asp216–Arg365.

Monomer.

The protein localises to the plastid. It is found in the chloroplast. Functionally, water-soluble antenna for capture of solar energy in the blue-green range. Peridinin is an asymmetric carotenoid. The chain is Peridinin-chlorophyll a-binding protein, chloroplastic from Symbiodinium sp. (Dinoflagellate).